Reading from the N-terminus, the 375-residue chain is Phosphoglucan phosphatase DSP4, amyloplastic (375 aa).

The N-terminal 42 residues, Met-1–Arg-42, are a transit peptide targeting the amyloplast. The disordered stretch occupies residues Ile-49 to Tyr-71. Positions Gly-51–Ala-61 are enriched in polar residues. Residues Asn-92–Lys-249 enclose the Tyrosine-protein phosphatase domain. Cys-193 acts as the Phosphocysteine intermediate in catalysis. Thr-194–Arg-199 provides a ligand contact to substrate. The polysaccharide binding stretch occupies residues Leu-254–Val-330.

In terms of tissue distribution, expressed in phloem parenchyma of 16-24 week old seedlings and 2 year old trees (at protein level). Expressed in leaves of 16-24 week old seedlings and 2 year old trees.

Its subcellular location is the plastid. It is found in the amyloplast. The protein resides in the nucleus. Starch granule-associated phosphoglucan phosphatase involved in the control of starch accumulation. Acts as a major regulator of the initial steps of starch degradation at the granule surface. Functions during the day by dephosphorylating the night-accumulated phospho-oligosaccharides. Can release phosphate from both the C6 and the C3 positions. The chain is Phosphoglucan phosphatase DSP4, amyloplastic from Castanea sativa (Sweet chestnut).